The chain runs to 708 residues: Caprin-1 (708 aa).

2 stretches are compositionally biased toward low complexity: residues 1–15 (MPSA…SKSS) and 22–37 (GSSG…APAS). Residues 1 to 48 (MPSATSHSGSGSKSSGPPPPSGSSGNEAGAGAAAPASQHPMTGTGAVQ) are disordered. Position 2 is an N-acetylproline (Pro-2). Ser-10 is modified (phosphoserine). Residues 58–92 (VIDKKLRNLEKKKGKLDDYQERMNKGERLNQDQLD) adopt a coiled-coil conformation. Ser-113 is subject to Phosphoserine. Residues 123 to 151 (KTIKKTARREQLMREEAEQKRLKTVLELQ) adopt a coiled-coil conformation. Omega-N-methylarginine is present on Arg-163. Residues 258–287 (EEAASAPTVEDQAAEAEPEPVEEYTEQNEV) are disordered. Acidic residues predominate over residues 269-287 (QAAEAEPEPVEEYTEQNEV). Residues Ser-333 and Ser-341 each carry the phosphoserine modification. Positions 358–379 (QDLMAQMQGPYNFIQDSMLDFE) are G3BP1-binding. The segment covering 415-452 (LAQPNQVSVQPEATQVPLVSSTSEGYTASQPLYQPSHA) has biased composition (polar residues). 4 disordered regions span residues 415–459 (LAQP…RPQK), 473–497 (TDQT…GTSK), 521–559 (NAPV…QTEL), and 571–708 (YHGS…QQVN). Low complexity-rich tracts occupy residues 475 to 489 (QTTA…SQPQ) and 535 to 559 (QQNQ…QTEL). The span at 572 to 603 (HGSQDQPHQVTGNHQQPPQQNTGFPRSNQPYY) shows a compositional bias: polar residues. Tyr-623 carries the phosphotyrosine modification. Omega-N-methylarginine occurs at positions 624 and 631. Tyr-634 and Tyr-637 each carry phosphotyrosine. Arg-638 carries the omega-N-methylarginine modification. A compositionally biased stretch (polar residues) spans 640-656 (SFSTNTPNSGYTQSQFS). O-linked (GlcNAc) serine glycosylation is found at Ser-642 and Ser-648. 4 positions are modified to phosphotyrosine: Tyr-650, Tyr-661, Tyr-664, and Tyr-669. Low complexity-rich tracts occupy residues 675 to 685 (RGSGQSGPRGA) and 696 to 708 (NRGM…QQVN). Arg-697 carries the post-translational modification Asymmetric dimethylarginine; alternate. At Arg-697 the chain carries Omega-N-methylarginine; alternate.

Belongs to the caprin family. May form homomultimers. Interacts with G3BP1; interaction is direct and promotes stress granule formation. Interacts with G3BP2; interaction is direct and promotes stress granule formation. Interacts with PQBP1. Interacts with DDX3X. Interacts (when phosphorylated by EPHA4) with FMR1; interaction with FMR1 promotes formation of a membraneless compartment. Post-translationally, tyrosine phosphorylation by EPHA4 promotes interaction with FMR1 and liquid-liquid phase separation (LLPS) for the formation of a membraneless compartment that concentrates mRNAs with associated regulatory factors. O-glycosylated (O-GlcNAcylated), in a cell cycle-dependent manner. O-glycosylation by OGT inhibit ability to undergo liquid-liquid phase separation (LLPS).

The protein resides in the cytoplasm. It localises to the cytoplasmic ribonucleoprotein granule. It is found in the cytosol. Its subcellular location is the cell projection. The protein localises to the dendrite. The protein resides in the lamellipodium. Ability to mediate liquid-liquid phase separation is regulated by ATP: moderate concentrations of ATP enhance phase separation, whereas high concentrations of ATP lead to inhibition of phase separation. In terms of biological role, mRNA-binding protein that acts as a regulator of mRNAs transport, translation and/or stability, and which is involved in neurogenesis, synaptic plasticity in neurons and cell proliferation and migration in multiple cell types. Plays an essential role in cytoplasmic stress granule formation. Acts as an mRNA regulator by mediating formation of some phase-separated membraneless compartment: undergoes liquid-liquid phase separation upon binding to target mRNAs, leading to assemble mRNAs into cytoplasmic ribonucleoprotein granules that concentrate mRNAs with associated regulatory factors. Undergoes liquid-liquid phase separation following phosphorylation and interaction with FMR1, promoting formation of cytoplasmic ribonucleoprotein granules that concentrate mRNAs with factors that inhibit translation and mediate deadenylation of target mRNAs. In these cytoplasmic ribonucleoprotein granules, CAPRIN1 mediates recruitment of CNOT7 deadenylase, leading to mRNA deadenylation and degradation. Binds directly and selectively to MYC and CCND2 mRNAs. In neuronal cells, directly binds to several mRNAs associated with RNA granules, including BDNF, CAMK2A, CREB1, MAP2, NTRK2 mRNAs, as well as to GRIN1 and KPNB1 mRNAs, but not to rRNAs. This is Caprin-1 (CAPRIN1) from Bos taurus (Bovine).